Reading from the N-terminus, the 503-residue chain is Transcriptional regulator LovE (503 aa).

Positions methionine 1–leucine 14 are enriched in polar residues. Positions methionine 1–arginine 21 are disordered. Positions cysteine 35–cysteine 67 form a DNA-binding region, zn(2)-C6 fungal-type. Disordered stretches follow at residues alanine 89–leucine 124 and serine 331–proline 362. Residues serine 339 to threonine 349 are compositionally biased toward basic and acidic residues. Over residues serine 350 to aspartate 359 the composition is skewed to polar residues.

Its subcellular location is the nucleus. Functionally, transcription factor that regulates the expression of the he gene cluster that mediates the biosynthesis of lovastatin (also known as mevinolin, mevacor or monacolin K), a hypolipidemic inhibitor of (3S)-hydroxymethylglutaryl-coenzyme A (HMG-CoA) reductase (HMGR). This Aspergillus terreus (strain NIH 2624 / FGSC A1156) protein is Transcriptional regulator LovE.